The sequence spans 442 residues: Vacuolar zinc transporter ZRC1 (442 aa).

Residues 1–8 (MITGKELR) are Cytoplasmic-facing. The chain crosses the membrane as a helical span at residues 9 to 29 (IISLLTLDTVFFLLEITIGYM). At 30-32 (SHS) the chain is on the vacuolar side. A helical membrane pass occupies residues 33-53 (LALIADSFHMLNDIISLLVAL). Residues 54–75 (WAVDVAKNRGPDAKYTYGWKRA) lie on the Cytoplasmic side of the membrane. Residues 76 to 96 (EILGALINAVFLIALCFSIMI) traverse the membrane as a helical segment. At 97-112 (EALQRLIEPQEIQNPR) the chain is on the vacuolar side. A helical transmembrane segment spans residues 113–133 (LVLYVGVAGLISNVVGLFLFH). At 134–235 (DHGSDSLHSH…GHRSLNMHGV (102 aa)) the chain is on the cytoplasmic side. 3 short sequence motifs (histidine repeat) span residues 141-145 (HSHSH), 163-167 (HSHSH), and 216-220 (HDHSH). Disordered regions lie at residues 141–170 (HSHS…HASL) and 208–227 (QPLL…KPGH). Residues 149 to 170 (ESGNNDLDIESNATHSHSHASL) are compositionally biased toward polar residues. The span at 212-224 (NHDDHDHSHESKK) shows a compositional bias: basic and acidic residues. Residues 236–256 (FLHVLGDALGNIGVIAAALFI) form a helical membrane-spanning segment. Residues 257–265 (WKTEYSWRY) are Vacuolar-facing. A helical transmembrane segment spans residues 266–286 (YSDPIVSLIITIIIFSSALPL). Residues 287-442 (SRRASRILLQ…AVNCNTSNCL (156 aa)) are Cytoplasmic-facing. K357 is covalently cross-linked (Glycyl lysine isopeptide (Lys-Gly) (interchain with G-Cter in ubiquitin)). Residues S387, S393, and S397 each carry the phosphoserine modification. A disordered region spans residues 391-419 (GGSPSSSQEAFDSHGNTEHGRKKRSPTAY).

The protein belongs to the cation diffusion facilitator (CDF) transporter (TC 2.A.4) family. SLC30A subfamily.

It localises to the vacuole membrane. It catalyses the reaction Zn(2+)(in) = Zn(2+)(out). Functionally, vacuolar transporter that regulates zinc homeostasis by mediating zinc transport and storage into the vacuole. ZRC1 senses zinc availability in the cytosol, which might be performed through the histidine repeat motifs, and transports zinc from the cytosol to the vacuole if zinc in cytosol is abundant, conferring resistance to zinc toxicity. Plays a role in resistance to zinc shock resulting from sudden influx of zinc into cytoplasm when ZRT1 and ZRT2 are induced in response to zinc depletion. This is Vacuolar zinc transporter ZRC1 from Saccharomyces cerevisiae (strain ATCC 204508 / S288c) (Baker's yeast).